The chain runs to 719 residues: Fusicoccadiene synthase (719 aa).

The segment at 1–334 (MEFKYSEVVE…RYNPDVSFNK (334 aa)) is fusicocca-2,10(14)-diene synthase. Mg(2+) contacts are provided by Asp92 and Asp96. The interval 335–719 (TQLEWMRQGL…MRLLLELLRV (385 aa)) is geranylgeranyl diphosphate synthase. The segment at 358 to 404 (EIDSDESAVSPTADESDSTEDSLGSGSRQDSSLSTGLSLSPVHSNEG) is disordered. Over residues 378-400 (DSLGSGSRQDSSLSTGLSLSPVH) the composition is skewed to polar residues. Residues Lys435, Arg438, and His467 each contribute to the isopentenyl diphosphate site. Asp474 and Asp478 together coordinate Mg(2+). A dimethylallyl diphosphate-binding site is contributed by Arg483. Residue Arg484 coordinates isopentenyl diphosphate. Residues Lys561, Thr562, Gln602, Asn609, Lys619, and Lys629 each coordinate dimethylallyl diphosphate.

The protein in the N-terminal section; belongs to the terpene synthase family. It in the C-terminal section; belongs to the FPP/GGPP synthase family. As to quaternary structure, hexamer.

It catalyses the reaction geranylgeranyl diphosphate = fusicocca-2,10(14)-diene + diphosphate. It carries out the reaction isopentenyl diphosphate + (2E,6E)-farnesyl diphosphate = (2E,6E,10E)-geranylgeranyl diphosphate + diphosphate. Its pathway is mycotoxin biosynthesis. In terms of biological role, multifunctional diterpene synthase; part of the 2 gene clusters that mediate the biosynthesis of fusicoccins, diterpene glucosides that display phytohormone-like activity and function as potent activators of plasma membrane H(+)-ATPases in plants by modifying 14-3-3 proteins and cause the plant disease constriction canker. The first step in the pathway is performed by the fusicoccadiene synthase PaFS that possesses both prenyl transferase and terpene cyclase activity, converting isopentenyl diphosphate and dimethylallyl diphosphate into geranylgeranyl diphosphate (GGDP) and successively converting GGDP into fusicocca-2,10(14)-diene, a precursor for fusicoccin H. Fusicoccadiene synthase is an allosteric enzyme for GGPP cyclization that generates 64% fusicoccadiene, 9% delta-araneosene, and one additional unidentified diterpene product, when incubated with GGPP. In the absence of isopentenyl diphosphate (IPP), PaFS can also solvolyze the shorter chain geranyl diphosphate (GPP) and farnesyl diphosphate (FPP) as alternative substrates to yield predominantly acyclic products. FPP is converted to farnesol (60.5%), nerolidol (14.0%), and farnesene (14.0%), while GPP is converted to a mixture of geraniol (59.5%) and linalool (35.0%). The second step is the oxidation at the C-8 position by the cytochrome P450 monooxygenase PaP450-2 to yield fusicocca-2,10(14)-diene-8-beta-ol. The cytochrome P450 monooxygenase PaP450-1 then catalyzes the hydroxylation at the C-16 position to produce fusicocca-2,10(14)-diene-8-beta,16-diol. The dioxygenase fc-dox then catalyzes the 16-oxydation of fusicocca-2,10(14)-diene-8-beta,16-diol to yield an aldehyde (8-beta-hydroxyfusicocca-1,10(14)-dien-16-al). The short-chain dehydrogenase/reductase fc-sdr catalyzes the reduction of the aldehyde to yield fusicocca-1,10(14)-diene-8-beta,16-diol. The next step is the hydroxylation at C-9 performed by the cytochrome P450 monooxygenase PaP450-3 that leads to fusicoccin H aglycon which is glycosylated to fusicoccin H by the O-glycosyltransferase PAGT. Hydroxylation at C-12 by the cytochrome P450 monooxygenase PaP450-4 leads then to the production of fusicoccin Q and is followed by methylation by the O-methyltransferase PAMT to yield fusicoccin P. Fusicoccin P is further converted to fusicoccin J via prenylation by the O-glucose prenyltransferase PaPT. Cytochrome P450 monooxygenase PaP450-5 then performs hydroxylation at C-19 to yield dideacetyl-fusicoccin A which is acetylated to 3'-O-deacetyl-fusicoccin A by the O-acetyltransferase PaAT-2. Finally, a another acetylation by the O-acetyltransferase PaAT-1 yields fusicoccin A. This chain is Fusicoccadiene synthase, found in Phomopsis amygdali (Fusicoccum amygdali).